Here is a 364-residue protein sequence, read N- to C-terminus: MLIFPLINDTSRKIIHIDMDAFFASVEERDNPSLKGKPVIIGSDPRKTGGRGVVSTCNYEARKFGVHSAMSSKEAYERCPQAIFISGNYQKYRQVGMEVRDIFKKYTDLVEPMSIDEAYLDVTENKMGIKSAVKLAKMIQYDIWNDVHLTCSAGISYNKFLAKLASDFEKPKGLTLILPDQAQDFLKPLPIEKFHGVGKRSVEKLHALGVYTGEDLLSLSEISLIDMFGRFGYDLYRKARGINASPVKPDRVRKSIGSEKTYGKLLYNEADIKAEISKNVQRVVASLEKNKKVGKTIVLKVRYADFETLTKRMTLEEYTQDFQIIDQVAKAIFDTLEESVFGIRLLGVTVTTLENEHEAIYLDF.

In terms of domain architecture, UmuC spans 14-198 (IIHIDMDAFF…LPIEKFHGVG (185 aa)). Residues Asp-18 and Asp-116 each contribute to the Mg(2+) site. Residue Glu-117 is part of the active site.

This sequence belongs to the DNA polymerase type-Y family. In terms of assembly, monomer. Mg(2+) is required as a cofactor.

The protein localises to the cytoplasm. The catalysed reaction is DNA(n) + a 2'-deoxyribonucleoside 5'-triphosphate = DNA(n+1) + diphosphate. Its function is as follows. Poorly processive, error-prone DNA polymerase involved in untargeted mutagenesis. Copies undamaged DNA at stalled replication forks, which arise in vivo from mismatched or misaligned primer ends. These misaligned primers can be extended by PolIV. Exhibits no 3'-5' exonuclease (proofreading) activity. May be involved in translesional synthesis, in conjunction with the beta clamp from PolIII. This Streptococcus agalactiae serotype Ia (strain ATCC 27591 / A909 / CDC SS700) protein is DNA polymerase IV.